The sequence spans 220 residues: uncharacterized protein (220 aa).

Helical transmembrane passes span 61 to 81 (LISV…SFFG), 85 to 105 (SVMF…YGAF), 115 to 135 (FVII…ILLL), and 150 to 170 (LPLE…SLLL).

The protein resides in the membrane. This is an uncharacterized protein from Caenorhabditis elegans.